A 339-amino-acid chain; its full sequence is Pyrimidine monooxygenase RutA (339 aa).

Residues 26–27, Asn92, Glu101, 117–118, and Ser167 each bind FMN; these read IK and RY.

This sequence belongs to the NtaA/SnaA/DszA monooxygenase family. RutA subfamily.

The catalysed reaction is uracil + FMNH2 + NADH + O2 = (Z)-3-ureidoacrylate + FMN + NAD(+) + H2O + H(+). The enzyme catalyses thymine + FMNH2 + NADH + O2 = (Z)-2-methylureidoacrylate + FMN + NAD(+) + H2O + H(+). Catalyzes the pyrimidine ring opening between N-3 and C-4 by an unusual flavin hydroperoxide-catalyzed mechanism, adding oxygen atoms in the process to yield ureidoacrylate peracid, that immediately reacts with FMN forming ureidoacrylate and FMN-N(5)-oxide. The FMN-N(5)-oxide reacts spontaneously with NADH to produce FMN. Requires the flavin reductase RutF to regenerate FMN in vivo. In Cronobacter sakazakii (strain ATCC BAA-894) (Enterobacter sakazakii), this protein is Pyrimidine monooxygenase RutA.